A 261-amino-acid polypeptide reads, in one-letter code: Methyltransferase nsrG (261 aa).

A methyltransferase domain region spans residues 49-141 (DVGAGNGPYA…AHQLRPGALF (93 aa)).

This sequence belongs to the methyltransferase superfamily.

The protein operates within secondary metabolite biosynthesis. Methyltransferase; part of the gene cluster that mediates the biosynthesis of the tetrahydroxanthone dimer neosartorin, which exhibits antibacterial activity. The two different monomeric units appear to be synthesized by the same set of enzymes, among which the Baeyer-Villiger monooxygenase nsrF is the key enzyme for the divergence of the biosynthetic routes. The pathway begins with the synthesis of atrochrysone thioester by the polyketide synthase nsrB. The atrochrysone carboxyl ACP thioesterase nsrC then breaks the thioester bond and releases the atrochrysone carboxylic acid from AacuL. Atrochrysone carboxylic acid is decarboxylated by the decarboxylase nsrE, and oxidized by the anthrone oxygenase nsrD to yield emodin. Emodin is then reduced to emodin hydroquinone by the oxidoreductase nsrR. A-ring reduction by the short chain dehydrogenase nsrJ, dehydration by the scytalone dehydratase-like protein nsrI and probable spontaneous re-oxidation, results in overall deoxygenation to chrysophanol. The Baeyer-Villiger monooxygenase nsrF accepts chrysophanol as a substrate to insert one oxygen atom at two different positions to yield the precursors of both monomric units. NsrF is promiscuous/flexible in interacting with the 2 (non methylated and methylated) aromatic rings of chrysophanol, thus diverging the biosynthetic pathway at this point. After the hydrolysis of the lactones, methylesterification by the methyltransferase nsrG yields respectively moniliphenone and 2,2',6'-trihydroxy-4-methyl-6-methoxya-cyldiphenylmethanone. The next steps are the hydroxylation by the FAD-dependent monooxygenase nsrK, followed by isomerization by the monooxygenase nsrQ. The short chain dehydrogenase/reductase nsrO then catalyzes the C-5 ketoreduction to give the xanthone skeleton of blennolide C and 5-acetylblennolide A. The acetyltransferase nsrL has a strict substrate specificity and uses only blennolide A but not blennolide C to yield 5-acetylblennolide A as the single-acetylated product. In the final step of the biosynthesis, the heterodimerization of the 2 xanthones, blennolide C and 5-acetylblennolide A, is catalyzed by the cytochrome P450 monooxygenase nsrP. NsrP can utilize at least three different xanthones as its substrates to perform the dimerization reaction. The polypeptide is Methyltransferase nsrG (Aspergillus novofumigatus (strain IBT 16806)).